We begin with the raw amino-acid sequence, 701 residues long: UvrABC system protein B (701 aa).

The Helicase ATP-binding domain maps to 35 to 422 (RRIQGGAADT…GGDVVEQVIR (388 aa)). Position 48–55 (48–55 (GATGTGKT)) interacts with ATP. Residues 101–124 (YYDYYQPEAYVPQTDTYIEKDSSI) carry the Beta-hairpin motif. In terms of domain architecture, Helicase C-terminal spans 439–605 (QIDDLVHEIR…PLRKKIADIL (167 aa)). Residues 620–648 (ARSRGEKRGTPTPRSGALSGPDRVAEQAK) are disordered. The UVR domain maps to 656 to 691 (AALVEQLTEQMHQAAADLQFELAARLRDEIKELKRE).

This sequence belongs to the UvrB family. Forms a heterotetramer with UvrA during the search for lesions. Interacts with UvrC in an incision complex.

The protein resides in the cytoplasm. The UvrABC repair system catalyzes the recognition and processing of DNA lesions. A damage recognition complex composed of 2 UvrA and 2 UvrB subunits scans DNA for abnormalities. Upon binding of the UvrA(2)B(2) complex to a putative damaged site, the DNA wraps around one UvrB monomer. DNA wrap is dependent on ATP binding by UvrB and probably causes local melting of the DNA helix, facilitating insertion of UvrB beta-hairpin between the DNA strands. Then UvrB probes one DNA strand for the presence of a lesion. If a lesion is found the UvrA subunits dissociate and the UvrB-DNA preincision complex is formed. This complex is subsequently bound by UvrC and the second UvrB is released. If no lesion is found, the DNA wraps around the other UvrB subunit that will check the other stand for damage. In Thermobifida fusca (strain YX), this protein is UvrABC system protein B.